Consider the following 719-residue polypeptide: Pesticidal crystal protein Cry1Ia (719 aa).

The protein belongs to the delta endotoxin family.

Its function is as follows. Promotes colloidosmotic lysis by binding to the midgut epithelial cells of certain coleopteran and lepidopteran species. Active on Plutella xylostella and Bombyx mori. This is Pesticidal crystal protein Cry1Ia (cry1Ia) from Bacillus thuringiensis subsp. kurstaki.